The sequence spans 475 residues: UDP-glycosyltransferase 708A6 (475 aa).

UDP-alpha-D-glucose contacts are provided by residues S286, 348–349, 366–374, and 388–391; these read WV, HCGWNSLTE, and FGDQ.

It belongs to the UDP-glycosyltransferase family. As to expression, expressed in radicles, hypocotyls and juvenile leaves. Expressed at low levels in roots.

Functionally, bifunctional glycosyltransferase that can produce both C- and O-glycosidated flavonoids. Converts 2-hydroxynaringenin to isovitexin. Converts eriodictyol to orientin and isoorientin. Converts naringenin and eriodictyol to naringenin 7-O-glucoside and eriodictyol 7-O-glucoside, respectively. This Zea mays (Maize) protein is UDP-glycosyltransferase 708A6.